The primary structure comprises 101 residues: Integration host factor subunit beta (101 aa).

The protein belongs to the bacterial histone-like protein family. In terms of assembly, heterodimer of an alpha and a beta chain.

Functionally, this protein is one of the two subunits of integration host factor, a specific DNA-binding protein that functions in genetic recombination as well as in transcriptional and translational control. In Rhodopseudomonas palustris (strain BisB5), this protein is Integration host factor subunit beta.